The sequence spans 195 residues: UPF0167 protein CbrC (195 aa).

This sequence belongs to the UPF0167 family.

The chain is UPF0167 protein CbrC (cbrC) from Escherichia coli (strain K12).